Consider the following 218-residue polypeptide: Acetyl- and succinyl-CoA transferase MT0822 (218 aa).

The N-acetyltransferase domain occupies 32 to 188 (DTILEGVHDP…EALLFRLTRD (157 aa)). Residues Gln-94, 109-113 (SGSWL), 119-124 (GHGYGT), 145-151 (SRSFVDN), and Arg-160 each bind substrate.

In terms of assembly, dimer of dimers.

The enzyme catalyses L-lysyl-[protein] + acetyl-CoA = N(6)-acetyl-L-lysyl-[protein] + CoA + H(+). The catalysed reaction is succinyl-CoA + L-lysyl-[protein] = N(6)-succinyl-L-lysyl-[protein] + CoA + H(+). Functionally, acetylates and succinylates nucleoid-associated, DNA-binding protein HupB. This chain is Acetyl- and succinyl-CoA transferase MT0822, found in Mycobacterium tuberculosis (strain CDC 1551 / Oshkosh).